The sequence spans 142 residues: Large ribosomal subunit protein uL11 (142 aa).

It belongs to the universal ribosomal protein uL11 family. Part of the ribosomal stalk of the 50S ribosomal subunit. Interacts with L10 and the large rRNA to form the base of the stalk. L10 forms an elongated spine to which L12 dimers bind in a sequential fashion forming a multimeric L10(L12)X complex. Post-translationally, one or more lysine residues are methylated.

Its function is as follows. Forms part of the ribosomal stalk which helps the ribosome interact with GTP-bound translation factors. The protein is Large ribosomal subunit protein uL11 of Leptospira interrogans serogroup Icterohaemorrhagiae serovar copenhageni (strain Fiocruz L1-130).